The primary structure comprises 180 residues: Large ribosomal subunit protein uL22 (180 aa).

Disordered stretches follow at residues Met1–Arg20 and Pro160–Ala180. Residues Lys8–Arg20 are compositionally biased toward polar residues.

This sequence belongs to the universal ribosomal protein uL22 family.

The sequence is that of Large ribosomal subunit protein uL22 (rpl17) from Dictyostelium discoideum (Social amoeba).